Reading from the N-terminus, the 273-residue chain is Chondrolectin (273 aa).

The N-terminal stretch at 1-21 is a signal peptide; that stretch reads MIRIASLLLGAALLCAQGAFA. The Extracellular segment spans residues 22–216; the sequence is RRVVSGQKVC…VVTEAGIIPN (195 aa). The region spanning 35–179 is the C-type lectin domain; it reads VKHPCYKMAY…CNMKHNYICK (145 aa). 2 cysteine pairs are disulfide-bonded: C61–C178 and C144–C170. N86 is a glycosylation site (N-linked (GlcNAc...) asparagine). Residues 217–237 form a helical membrane-spanning segment; it reads LIYVIIPTIPLLLLILVALGT. Over 238-273 the chain is Cytoplasmic; that stretch reads CCFQMLHKSKGRSKTSPNQSTLWISKSTRKESGMEV. Positions 247–273 are disordered; the sequence is KGRSKTSPNQSTLWISKSTRKESGMEV. The span at 251–263 shows a compositional bias: polar residues; that stretch reads KTSPNQSTLWISK.

In terms of assembly, interacts with RABGGTB. In adult mice preferentially expressed in skeletal muscle, testis, brain, and lung. Expressed in striated muscle (at protein level). Expressed in spinal cord. Detected in spinal cord fast motor neurons (at protein level).

It localises to the membrane. May play a role in the development of the nervous system such as in neurite outgrowth and elongation. May be involved in motor axon growth and guidance. This Mus musculus (Mouse) protein is Chondrolectin (Chodl).